Consider the following 776-residue polypeptide: Isoamylase (776 aa).

Residues 1 to 26 form the signal peptide; it reads MKCPKILAALLGCAVLAGVPAMPAHA. Asp-154, Glu-255, Thr-256, Asn-258, and Asp-285 together coordinate Ca(2+). Asp-401 serves as the catalytic Nucleophile. An intrachain disulfide couples Cys-410 to Cys-422. The active-site Proton donor is Glu-461. 2 disulfides stabilise this stretch: Cys-546–Cys-616 and Cys-738–Cys-766.

It belongs to the glycosyl hydrolase 13 family. As to quaternary structure, monomer. Ca(2+) serves as cofactor.

The enzyme catalyses Hydrolysis of (1-&gt;6)-alpha-D-glucosidic branch linkages in glycogen, amylopectin and their beta-limit dextrins.. The chain is Isoamylase (iam) from Pseudomonas sp. (strain SMP1).